Here is a 136-residue protein sequence, read N- to C-terminus: MLEFFRPPRARSPRELVQLLPEAWTTSRSSTGSANPSASRKPARYPRIHAPELQSGEARWPLWSRIRPLEDPLKQRLTNLEKKITNVTTKFEQIEKCCKRNDEVLFRLENHAETLRAAMISLAKKIDVQTGRRPYE.

The disordered stretch occupies residues Glu-22 to Ala-50. Over residues Trp-24–Ala-38 the composition is skewed to polar residues. Asn-86 carries N-linked (GlcNAc...) asparagine; by host glycosylation.

The protein belongs to the poxviruses fusion protein family. In terms of assembly, homotrimer, covalently linked.

Its subcellular location is the virion membrane. Functionally, this protein appears to play an important role in virus penetration at the level of cell fusion. The N-terminal proximal region is essential for fusion ability. Essential in fusing the outermost of the two Golgi-derived membranes enveloping the virus with the plasma membrane, and in its subsequent release extracellularly. The sequence is that of 14 kDa fusion protein from Vaccinia virus (strain WR 65-16) (VACV).